Consider the following 240-residue polypeptide: 1-(5-phosphoribosyl)-5-[(5-phosphoribosylamino)methylideneamino] imidazole-4-carboxamide isomerase (240 aa).

Residue Asp-8 is the Proton acceptor of the active site. Asp-129 serves as the catalytic Proton donor.

The protein belongs to the HisA/HisF family.

The protein resides in the cytoplasm. It carries out the reaction 1-(5-phospho-beta-D-ribosyl)-5-[(5-phospho-beta-D-ribosylamino)methylideneamino]imidazole-4-carboxamide = 5-[(5-phospho-1-deoxy-D-ribulos-1-ylimino)methylamino]-1-(5-phospho-beta-D-ribosyl)imidazole-4-carboxamide. It functions in the pathway amino-acid biosynthesis; L-histidine biosynthesis; L-histidine from 5-phospho-alpha-D-ribose 1-diphosphate: step 4/9. In Listeria welshimeri serovar 6b (strain ATCC 35897 / DSM 20650 / CCUG 15529 / CIP 8149 / NCTC 11857 / SLCC 5334 / V8), this protein is 1-(5-phosphoribosyl)-5-[(5-phosphoribosylamino)methylideneamino] imidazole-4-carboxamide isomerase.